We begin with the raw amino-acid sequence, 739 residues long: Exocyst complex component 3-like protein (739 aa).

Positions 1-370 are mediates interaction with EXOC2, EXOC4 and EXOC5; that stretch reads MDSAARDKTQ…DVSDLEPLLT (370 aa).

Belongs to the SEC6 family. In terms of assembly, interacts with EXOC2, EXOC4 and EXOC5; may be part of the exocyst.

The protein resides in the cytoplasmic vesicle. It is found in the secretory vesicle. Its function is as follows. As part of the exocyst, may play a role in regulated exocytosis of insulin granules. The polypeptide is Exocyst complex component 3-like protein (EXOC3L1) (Bos taurus (Bovine)).